Consider the following 169-residue polypeptide: Der GTPase-activating protein YihI (169 aa).

Disordered stretches follow at residues 1-92 and 146-169; these read MKPS…EKPM and SYDD…LRGN. A compositionally biased stretch (basic residues) spans 10–19; sequence SKGHAKARRK. Over residues 20–30 the composition is skewed to basic and acidic residues; it reads TREELDQEARD. Basic residues predominate over residues 31–40; that stretch reads RKRQKKRRGH. Positions 49 to 58 are enriched in polar residues; it reads GNTTSGSKGQ. Residues 147-159 show a composition bias toward acidic residues; the sequence is YDDDEEEEEDEKQ. Residues 160–169 are compositionally biased toward basic and acidic residues; the sequence is EDMMRLLRGN.

It belongs to the YihI family. As to quaternary structure, interacts with Der.

Its function is as follows. A GTPase-activating protein (GAP) that modifies Der/EngA GTPase function. May play a role in ribosome biogenesis. The polypeptide is Der GTPase-activating protein YihI (Escherichia coli O1:K1 / APEC).